We begin with the raw amino-acid sequence, 346 residues long: MSKLLREVTPEERRLYYSGEWDAKKLPEFIVESIERREFGFDHTGEGPSDRKNAFSDVRDLEDYIRATAPYAAYSSVAFYRNPQEMEGWLGAELVFDIDAKDLPLRRCQNEHPSGQVCPICLEDAKELARDTLIILKEDFGFENIHVVYSGRGYHIRVIDEWALKLDSKARERILSYVSAAEEVTFDDIQKRYIMLSSGYFRVFRLRFGYFIQRINENHLKNIGLKRSTAEKLLDEKTRQDIVEKFVNKGLLAAFPEGVGYRTLLRLFGLSTTFSKAYFDGRVTVDLKRILRLPSTLHSKVGLVATYIGSDEKRLEKFDPFKDAVPEFRKEEVQKAYQEWKELHEG.

Residues Asp-97, Asp-99, and Asp-280 contribute to the active site.

This sequence belongs to the eukaryotic-type primase small subunit family. Heterodimer of a small subunit (PriS) and a large subunit (PriL). It depends on Mg(2+) as a cofactor. The cofactor is Mn(2+).

Functionally, catalytic subunit of DNA primase, an RNA polymerase that catalyzes the synthesis of short RNA molecules used as primers for DNA polymerase during DNA replication. The small subunit contains the primase catalytic core and has DNA synthesis activity on its own. Binding to the large subunit stabilizes and modulates the activity, increasing the rate of DNA synthesis while decreasing the length of the DNA fragments, and conferring RNA synthesis capability. The DNA polymerase activity may enable DNA primase to also catalyze primer extension after primer synthesis. May also play a role in DNA repair. In Thermococcus kodakarensis (strain ATCC BAA-918 / JCM 12380 / KOD1) (Pyrococcus kodakaraensis (strain KOD1)), this protein is DNA primase small subunit PriS.